We begin with the raw amino-acid sequence, 307 residues long: O-acetylserine dependent cystathionine beta-synthase (307 aa).

Residue lysine 44 is modified to N6-(pyridoxal phosphate)lysine. Residues asparagine 74, 178–182, and serine 265 contribute to the pyridoxal 5'-phosphate site; that span reads GSGGT.

It belongs to the cysteine synthase/cystathionine beta-synthase family. Pyridoxal 5'-phosphate is required as a cofactor.

It catalyses the reaction O-acetyl-L-serine + L-homocysteine = L,L-cystathionine + acetate + H(+). Its function is as follows. Catalyzes the conversion of O-acetylserine and homocysteine to cystathionine. This chain is O-acetylserine dependent cystathionine beta-synthase (mccA), found in Bacillus subtilis (strain 168).